The primary structure comprises 827 residues: MLLCLSPAWLMKVATPGQEGEAVLLVSKAVSFYPGGLTFLDDFVPPRHATYFLAGLGPESGRGKEAAELARNLTCPTGTSSELSQLLENRLLMRWLLSQQSGVAVPATLAFTYRPPGLLRGGDASPGLRLVELSGKEGQETLVKEEVEAFVHSEALGDASQVAVRLSGCRWRGQQALPLHLRVEPSTVVNTVLGLLEKLEEEESVLVEAMCPPVRLPLPGGPAPGPELAVRICAVVCRIQGDRPLLSKVVCGVGRGDRPVRHHYTLPRTLRVALAQCGLEEEAQVALLEQGIKEAAEGALAAVLALEAGLSVEQRGGRQVHTDFLGVDLVLTVIGRTLTPVVLKLNSGLCLEACGALEGLWAVPRLRRSAEEAAAAPLVETMLRRSGRHLMDGKQLLVIGAGGVSKKFVWEAARDYGLTLHLVESDPNHFASQLVQTFIHFDVTEHRRDEENALLLAELVRARNLKLDGCFSFWDDCLVLTALLCRELGLPCSPPAAMCLAKQKSRTQLHLLRCQGPPWPSTSLHAVACCPLENEADVERAIYQVPLPGVMKLEFGSGAVGVQLVKDGPQCREHFSRILHDLQGEADHPGIGLGWGNAMLLMEFVEGTEHDVDLVVFGGRLLAAFVSDNGPTRLPGFTETAACMPTGLAPEQEAQVVQAAFRCCLGCGLLDGVFNVELKMTGAGPRLIEINPRMGGFYLRDWILELYGVDLLLASTMVACGLQPALPAHPRARGYLVGIMCLVSQHLQLLSSPSSRETLQTLHDQGQLRLNLLEEALIPGQYEEPYCNVACAGPSPAEACHRLLGICQGLGIDRPNYPVAHFLSHFK.

The ATP-grasp domain maps to 516 to 720 (GPPWPSTSLH…LLLASTMVAC (205 aa)). 542–611 (IYQVPLPGVM…MEFVEGTEHD (70 aa)) is an ATP binding site. Glu677, Glu689, and Asn691 together coordinate Mg(2+). Mn(2+)-binding residues include Glu677, Glu689, and Asn691.

Homotetramer. Mg(2+) is required as a cofactor. Requires Mn(2+) as cofactor.

The enzyme catalyses beta-alanine + L-histidine + ATP = carnosine + ADP + phosphate + H(+). It catalyses the reaction 4-aminobutanoate + L-histidine + ATP = L-homocarnosine + ADP + phosphate + H(+). Catalyzes the synthesis of carnosine and homocarnosine. Carnosine is synthesized more efficiently than homocarnosine. The polypeptide is Carnosine synthase 1 (Mus musculus (Mouse)).